The following is a 418-amino-acid chain: MTIEATIVDIAKAAKKAALAMATCPTDKKNQALLALADRLHKDAALIQAENKKDLEAAKATGLSSAMIDRLTVSDAVIASMADGLREVAALPDPVGAKSATWRRPNGLEVARMRIPLGVIGIIYESRPNVTVDAAGLCLKAGNTVILRGGSEALHSNRALAATISASLAESGLPETAVQVVPVADREAVTHLLAQEEYIDLIIPRGGEGLIRFVVQHSSIPVLKHYKGVCHVYVDQDADMEMARAICFNAKVQRPGVCNAMETLLVHRDAAQRFLPDMARQFADAGVALRGCAATRALLPGIETAEEADWYAEYLDLILAVKVVDSMDAAISHIATYGSSHTEVIVTNSYDRAMRFLAAVDSSVVLVNASTRFNDGGQLGLGAEIGISTSKLHAFGPMGLEELTTTKFIVLGNGQIRE.

It belongs to the gamma-glutamyl phosphate reductase family.

The protein localises to the cytoplasm. It carries out the reaction L-glutamate 5-semialdehyde + phosphate + NADP(+) = L-glutamyl 5-phosphate + NADPH + H(+). Its pathway is amino-acid biosynthesis; L-proline biosynthesis; L-glutamate 5-semialdehyde from L-glutamate: step 2/2. Functionally, catalyzes the NADPH-dependent reduction of L-glutamate 5-phosphate into L-glutamate 5-semialdehyde and phosphate. The product spontaneously undergoes cyclization to form 1-pyrroline-5-carboxylate. The protein is Gamma-glutamyl phosphate reductase of Desulfosudis oleivorans (strain DSM 6200 / JCM 39069 / Hxd3) (Desulfococcus oleovorans).